The primary structure comprises 215 residues: Urease accessory protein UreG (215 aa).

Residues 1 to 21 (MNAPASSPARRTKKLPPLRVG) are disordered. 24–31 (GPVGSGKT) is a GTP binding site.

It belongs to the SIMIBI class G3E GTPase family. UreG subfamily. Homodimer. UreD, UreF and UreG form a complex that acts as a GTP-hydrolysis-dependent molecular chaperone, activating the urease apoprotein by helping to assemble the nickel containing metallocenter of UreC. The UreE protein probably delivers the nickel.

The protein localises to the cytoplasm. Facilitates the functional incorporation of the urease nickel metallocenter. This process requires GTP hydrolysis, probably effectuated by UreG. This is Urease accessory protein UreG from Burkholderia vietnamiensis (strain G4 / LMG 22486) (Burkholderia cepacia (strain R1808)).